A 301-amino-acid chain; its full sequence is Syntaxin-17 (301 aa).

Ser-2 is subject to N-acetylserine. At 2-227 (SEDEEKVKLR…KNLQKAAKYK (226 aa)) the chain is on the cytoplasmic side. At Lys-41 the chain carries N6-acetyllysine. Residues 49–128 (DKLHEEHINA…QVNDEELLQP (80 aa)) are a coiled coil. Phosphotyrosine; by ABL1 is present on Tyr-156. The t-SNARE coiled-coil homology domain maps to 161 to 223 (IPQDQNAAES…EEGTKNLQKA (63 aa)). The chain crosses the membrane as a helical span at residues 228 to 248 (LAALPVAGALIGGVVGGPIGL). Residues 228–274 (LAALPVAGALIGGVVGGPIGLLAGFKVAGIAAALGGGVLGFTGGKLI) form a necessary and sufficient for localization to autophagosome region. The Lumenal segment spans residues 249–253 (LAGFK). A helical membrane pass occupies residues 254-274 (VAGIAAALGGGVLGFTGGKLI). Residues 275–301 (QRRKQKMMEKLTSSCPDLPSQSDKKRS) lie on the Cytoplasmic side of the membrane. Ser-288 carries the phosphoserine modification. The Endoplasmic reticulum retention signal motif lies at 298 to 301 (KKRS).

It belongs to the syntaxin family. As to quaternary structure, forms a SNARE complex composed of VAMP8, SNAP29 and STX17 involved in fusion of autophagosome with lysosome. May interact with VTI1B. Probably interacts with BET1, SCFD1 and SEC22B. Interacts with PTPN2 and ABL1; involved in STX17 phosphorylation. Interacts with COPB1. Interacts with TMED9 and TMED10; the interaction is direct. Interacts with VAMP7. Interacts with RUBCNL/PACER; promoting targeting of RUBCNL/PACER to autophagosome. Interacts with VAMP8, SNAP29, VPS39 and VPS41; these interactions are increased in the absence of TMEM39A. Interacts with IRGM; promoting STX17 recruitment to autophagosomes. Interacts with ATG8 proteins GABARAP and MAP1LC3B. Interacts with RNF115; this interaction enhances STX17 stability which in turn promotes autophagosome maturation. Interacts with RAB39A (GTP-bound); the interaction promotes autophagosome-lysosome membrane fusion driven by STX17-SNAP29-VAMP8. Interacts with RAB39B; the interaction may promote a different fonction in autophagy as compared with RAB39A. In terms of processing, dephosphorylation by PTPN2; regulates exit from the endoplasmic reticulum. Phosphorylated at Tyr-156 probably by ABL1.

It is found in the endoplasmic reticulum membrane. The protein localises to the smooth endoplasmic reticulum membrane. Its subcellular location is the endoplasmic reticulum-Golgi intermediate compartment membrane. The protein resides in the cytoplasmic vesicle. It localises to the autophagosome membrane. It is found in the COPII-coated vesicle membrane. The protein localises to the cytoplasm. Its subcellular location is the cytosol. The protein resides in the mitochondrion membrane. It localises to the autolysosome membrane. SNAREs, soluble N-ethylmaleimide-sensitive factor-attachment protein receptors, are essential proteins for fusion of cellular membranes. SNAREs localized on opposing membranes assemble to form a trans-SNARE complex, an extended, parallel four alpha-helical bundle that drives membrane fusion. STX17 is a SNARE of the autophagosome involved in autophagy through the direct control of autophagosome membrane fusion with the lysosome membrane. May also play a role in the early secretory pathway where it may maintain the architecture of the endoplasmic reticulum-Golgi intermediate compartment/ERGIC and Golgi and/or regulate transport between the endoplasmic reticulum, the ERGIC and the Golgi. The polypeptide is Syntaxin-17 (Mus musculus (Mouse)).